Here is a 1207-residue protein sequence, read N- to C-terminus: Histidine kinase 1 (1207 aa).

The span at 1–10 (MRGDSFSMSI) shows a compositional bias: polar residues. A disordered region spans residues 1 to 20 (MRGDSFSMSIENLPDSPMGS). Residues 1-81 (MRGDSFSMSI…SSYYSVFVVR (81 aa)) are Cytoplasmic-facing. A helical membrane pass occupies residues 82 to 102 (LAIMVMLAILIGLLTVLTWHF). The Extracellular segment spans residues 103–446 (TRIYTKQSLQ…GKVDERAFKT (344 aa)). A helical transmembrane segment spans residues 447–467 (LIILISASVCIFFIGCVCILI). The Cytoplasmic segment spans residues 468 to 1207 (LTNGVSKEMK…PSAFQTSLSA (740 aa)). The region spanning 505–763 (NMSHELRTPM…LMRLYLILST (259 aa)) is the Histidine kinase domain. His-508 is subject to Phosphohistidine; by autocatalysis. 2 disordered regions span residues 964–987 (DTCS…VKPS) and 1000–1021 (DATT…PEEE). Basic and acidic residues predominate over residues 975–984 (SGEKQVDKSV). Over residues 1000–1014 (DATTSNDDSTSASMT) the composition is skewed to low complexity. The region spanning 1045–1196 (RILLAEDTPV…LMVSTILSLT (152 aa)) is the Response regulatory domain. At Asp-1127 the chain carries 4-aspartylphosphate.

Interacts with AHP2, depending of the phosphorylation state of Asp-1075 in the receiver domain, but probably not with AHP1 and AHP3. In terms of processing, autophosphorylated predominantly on His residues. Activation probably requires a transfer of a phosphate group between a His in the transmitter domain and an Asp of the receiver domain. In terms of tissue distribution, mostly expressed in roots, and, to a lower extent, in stems, leaves and flowers.

It is found in the cell membrane. The enzyme catalyses ATP + protein L-histidine = ADP + protein N-phospho-L-histidine.. Its function is as follows. Functions as an osmosensor histidine kinase that detects water stress and transmits the stress signal to a downstream MAPK cascade. This protein undergoes an ATP-dependent autophosphorylation at a conserved histidine residue in the kinase core, and a phosphoryl group is then transferred to a conserved aspartate residue in the receiver domain. Positive regulator of drought and salt stress responses, and abscisic acid (ABA) signaling. Confers drought tolerance, probably by regulating levels of ABA accumulation. Plays a redundant role in regulating plant growth and development. Required for the regulation of desiccation processes during seed formation. The chain is Histidine kinase 1 (AHK1) from Arabidopsis thaliana (Mouse-ear cress).